A 148-amino-acid polypeptide reads, in one-letter code: Large ribosomal subunit protein uL13 (148 aa).

2 stretches are compositionally biased toward basic and acidic residues: residues Gly-71 to Glu-81 and Asp-89 to Ala-99. 2 disordered regions span residues Gly-71–Ala-99 and Lys-125–Ala-148.

It belongs to the universal ribosomal protein uL13 family. As to quaternary structure, part of the 50S ribosomal subunit.

Functionally, this protein is one of the early assembly proteins of the 50S ribosomal subunit, although it is not seen to bind rRNA by itself. It is important during the early stages of 50S assembly. The sequence is that of Large ribosomal subunit protein uL13 from Salinibacter ruber (strain DSM 13855 / M31).